Consider the following 554-residue polypeptide: Trichloroethene reductive dehalogenase (554 aa).

The segment at residues 1 to 42 (MSEKYHSTVTRRDFMKRLGLAGAGAGALGAAVLAENNLPHEF) is a signal peptide (tat-type signal). 2 consecutive 4Fe-4S ferredoxin-type domains span residues 425–457 (PTKP…HEGP) and 471–500 (EGWH…NNSW). The [4Fe-4S] cluster site is built by cysteine 437, cysteine 440, cysteine 443, cysteine 447, cysteine 480, cysteine 483, cysteine 486, and cysteine 490.

It belongs to the PceA family. Requires [4Fe-4S] cluster as cofactor. Corrinoid serves as cofactor. In terms of processing, predicted to be exported by the Tat system. The position of the signal peptide cleavage has been experimentally proven.

It is found in the cell membrane. The enzyme catalyses trichloroethene + AH2 = (Z)-1,2-dichloroethene + chloride + A + H(+). It catalyses the reaction (Z)-1,2-dichloroethene + AH2 = chloroethene + chloride + A + H(+). The catalysed reaction is 1,1-dichloroethene + AH2 = chloroethene + chloride + A + H(+). With respect to regulation, loses 93% of its activity upon incubation with 1-iodopropane and titanium(III) citrate in the dark. Subsequent exposure to light restores 80% of the original activity. Completely inhibited by 2 mM sodium sulfite or sodium dithionite, and by 1 mM cuprous chloride. In terms of biological role, catalyzes the reductive dechlorination of trichloroethene (TCE) to cis-1,2-dichloroethene (DCE) and of cis-1,2-dichloroethene to chloroethene. The substrate specificity is broad, and the enzyme can dehalogenate various substrates, including 1,1-dichloroethene (1,1-DCE), 1,2-dichloroethane and 1,2-dibromoethane. A variety of other haloalkanes and haloalkenes containing three to five carbon atoms are dehalogenated at lower rates. Trans-1,2-dichloroethene (trans-DCE) and chloroethene are degraded at rates which are approximately 2 orders of magnitude lower. Titanium(III) citrate and methyl viologen can be used as reductants. The polypeptide is Trichloroethene reductive dehalogenase (Dehalococcoides mccartyi (strain ATCC BAA-2266 / KCTC 15142 / 195) (Dehalococcoides ethenogenes (strain 195))).